A 135-amino-acid polypeptide reads, in one-letter code: ATP synthase epsilon chain (135 aa).

The protein belongs to the ATPase epsilon chain family. In terms of assembly, F-type ATPases have 2 components, CF(1) - the catalytic core - and CF(0) - the membrane proton channel. CF(1) has five subunits: alpha(3), beta(3), gamma(1), delta(1), epsilon(1). CF(0) has three main subunits: a, b and c.

Its subcellular location is the cell inner membrane. Produces ATP from ADP in the presence of a proton gradient across the membrane. The chain is ATP synthase epsilon chain from Rhizobium leguminosarum bv. trifolii (strain WSM2304).